Reading from the N-terminus, the 409-residue chain is Sulfide-quinone reductase (409 aa).

Residues 8 to 12 (GGRFG), 34 to 35 (NK), and Cys129 contribute to the FAD site. Cys178 (cysteine persulfide intermediate) is an active-site residue. FAD-binding residues include Asn271, Asp307, and Gly317. Cys350 acts as the Cysteine persulfide intermediate in catalysis.

This sequence belongs to the SQRD family. In terms of assembly, monomer. FAD is required as a cofactor.

Its subcellular location is the membrane. The enzyme catalyses n a quinone + n hydrogen sulfide + n H(+) = polysulfur(n-2) + n a quinol. With respect to regulation, inhibited by the quinone analog 2-heptyl-4-hydroxyquinolone N-oxide (HQNO). Inactivated by iodoacetamide treatment. Inhibited by KCN. Functionally, catalyzes the oxidation of sulfides, such as hydrogen sulfide, with the help of a quinone. Has the highest activity with caldariella quinone and decylubiquinone, and lower activity with naphtoquinones. Consecutive reaction cycles lead to the accumulation of a polysulfide product on the active site Cys residues; these products are released when they exceed a critical length, typically as cyclooctasulfur. The chain is Sulfide-quinone reductase from Acidianus ambivalens (Desulfurolobus ambivalens).